The sequence spans 413 residues: Aspartate aminotransferase, cytoplasmic (413 aa).

L-aspartate contacts are provided by Gly39 and Trp141. Ser149 bears the Phosphoserine mark. Asn195 provides a ligand contact to L-aspartate. Lys259 bears the N6-(pyridoxal phosphate)lysine mark. At Lys318 the chain carries N6-succinyllysine. Arg387 is a binding site for L-aspartate.

It belongs to the class-I pyridoxal-phosphate-dependent aminotransferase family. As to quaternary structure, homodimer. It depends on pyridoxal 5'-phosphate as a cofactor. Expressed in neurons of the retina. Localizes to the inner and outer plexiform layers, the inner and outer nuclear layer and the outer segments of photoreceptors.

It localises to the cytoplasm. The enzyme catalyses L-aspartate + 2-oxoglutarate = oxaloacetate + L-glutamate. The catalysed reaction is L-cysteine + 2-oxoglutarate = 2-oxo-3-sulfanylpropanoate + L-glutamate. It carries out the reaction (2S)-2-aminobutanoate + 2-oxoglutarate = 2-oxobutanoate + L-glutamate. It catalyses the reaction 3-sulfino-L-alanine + 2-oxoglutarate = 3-sulfinopyruvate + L-glutamate. With respect to regulation, inhibited by calcium ions. Biosynthesis of L-glutamate from L-aspartate or L-cysteine. Important regulator of levels of glutamate, the major excitatory neurotransmitter of the vertebrate central nervous system. Acts as a scavenger of glutamate in brain neuroprotection. The aspartate aminotransferase activity is involved in hepatic glucose synthesis during development and in adipocyte glyceroneogenesis. Using L-cysteine as substrate, regulates levels of mercaptopyruvate, an important source of hydrogen sulfide. Mercaptopyruvate is converted into H(2)S via the action of 3-mercaptopyruvate sulfurtransferase (3MST). Hydrogen sulfide is an important synaptic modulator and neuroprotectant in the brain. This Mus musculus (Mouse) protein is Aspartate aminotransferase, cytoplasmic.